The following is a 341-amino-acid chain: Inositol 2-dehydrogenase (341 aa).

This sequence belongs to the Gfo/Idh/MocA family. As to quaternary structure, homotetramer.

It carries out the reaction myo-inositol + NAD(+) = scyllo-inosose + NADH + H(+). Its function is as follows. Involved in the oxidation of myo-inositol (MI) to 2-keto-myo-inositol (2KMI or 2-inosose). The polypeptide is Inositol 2-dehydrogenase (Acidothermus cellulolyticus (strain ATCC 43068 / DSM 8971 / 11B)).